Reading from the N-terminus, the 463-residue chain is Cysteine--tRNA ligase (463 aa).

C29 is a Zn(2+) binding site. The 'HIGH' region motif lies at 31–41; the sequence is PTVYNYAHIGN. Residues C211, H236, and E240 each contribute to the Zn(2+) site. The 'KMSKS' region signature appears at 269 to 273; that stretch reads KMSKS. K272 contributes to the ATP binding site.

It belongs to the class-I aminoacyl-tRNA synthetase family. Monomer. It depends on Zn(2+) as a cofactor.

It localises to the cytoplasm. It catalyses the reaction tRNA(Cys) + L-cysteine + ATP = L-cysteinyl-tRNA(Cys) + AMP + diphosphate. The sequence is that of Cysteine--tRNA ligase from Caulobacter vibrioides (strain ATCC 19089 / CIP 103742 / CB 15) (Caulobacter crescentus).